Reading from the N-terminus, the 351-residue chain is Cytoplasmic dynein 2 light intermediate chain 1 (351 aa).

The tract at residues 304–351 is disordered; that stretch reads TLKDVKDPAKDPQYAESEVDEMRIQKDQELEQYKRSSSKSWKQIELDS. Residues 323–337 are compositionally biased toward basic and acidic residues; the sequence is DEMRIQKDQELEQYK.

It belongs to the dynein light intermediate chain family. Light intermediate chain of the cytoplasmic dynein complex 2, a multisubunit complex composed at least of eleven different proteins. The cytoplasmic dynein 2 complex consists of two catalytic heavy chains (HCs) and a number of non-catalytic subunits presented by intermediate chains (ICs), light intermediate chains (LICs) and light chains (LCs). Among them, a heavy chain (DYNC2H1), two intermediate chains (DYNC2I2 and DYNC2I1), a light intermediate chain (DYNC2LI1), and a light chain (DYNLT2B) are unique to the dynein-2 complex, but a subset of light chains are also shared by dynein-1 and dynein-2 complexes. Dynein-2 complex is built around two copies of cytoplasmic dynein 2 heavy chain 1 (DYNC2H1). The C-terminal region forms the motor domain, which converts the energy from ATP hydrolysis into movement. Its N-terminal region forms the tail, an extended structure that binds the other subunits and holds the two heavy chains in a homodimer. Interacts with DYNC2H1 (via N-terminus); this interaction stabilizes the dynein-2 complex structure.

It localises to the cytoplasm. The protein resides in the cell projection. Its subcellular location is the cilium. The protein localises to the cytoskeleton. It is found in the cilium basal body. It localises to the cilium axoneme. The protein resides in the microtubule organizing center. Its subcellular location is the centrosome. In terms of biological role, acts as one of several non-catalytic accessory components of the cytoplasmic dynein 2 complex (dynein-2 complex), a motor protein complex that drives the movement of cargos along microtubules within cilia and flagella in concert with the intraflagellar transport (IFT) system, facilitating the assembly of these organelles. Involved in the regulation of ciliary length. The protein is Cytoplasmic dynein 2 light intermediate chain 1 (DYNC2LI1) of Bos taurus (Bovine).